The primary structure comprises 574 residues: E3 ubiquitin-protein ligase TRIM23 (574 aa).

The RING-type; degenerate zinc finger occupies 31 to 76; that stretch reads CGVCEDVFSLQGDKVPRLLLCGHTVCHDCLTRLPLHGRAIRCPFDR. The segment at 122–168 adopts a B box-type; degenerate zinc-finger fold; that stretch reads ESIIRCDEDEAHLASVYCTVCATHLCSECSQVTHSTKTLAKHRRVPL. Residues 352–379 are a coiled coil; it reads RVVLAKQEITRLLETLQKQQQQFTEVAD. The ARF-like stretch occupies residues 390-574; the sequence is TFTKDNRVHI…LVAAGVLDVA (185 aa). Residues 411–418, 454–458, and 513–516 each bind GTP; these read GLDGAGKT, DVGGK, and NKQD.

This sequence in the C-terminal section; belongs to the small GTPase superfamily. Arf family. Homodimer. Interacts with PSCD1. Interacts with UBE2D2. Interacts with TBK1 (via N-terminal kinase domain) and p62/SQSTM1. As to quaternary structure, (Microbial infection) Interacts with human cytomegalovirus protein UL144; this interaction might cause autoubiquitination of TRAF6, leading to NF-kappa-B activation.

It is found in the cytoplasm. It localises to the endomembrane system. The protein resides in the golgi apparatus membrane. Its subcellular location is the lysosome membrane. It carries out the reaction S-ubiquitinyl-[E2 ubiquitin-conjugating enzyme]-L-cysteine + [acceptor protein]-L-lysine = [E2 ubiquitin-conjugating enzyme]-L-cysteine + N(6)-ubiquitinyl-[acceptor protein]-L-lysine.. It functions in the pathway protein modification; protein ubiquitination. Acts as an E3 ubiquitin-protein ligase. Plays an essential role in autophagy activation during viral infection. Mechanistically, activates TANK-binding kinase 1/TBK1 by facilitating its dimerization and ability to phosphorylate the selective autophagy receptor SQSTM1. In order to achieve this function, TRIM23 mediates 'Lys-27'-linked auto-ubiquitination of its ADP-ribosylation factor (ARF) domain to induce its GTPase activity and its recruitment to autophagosomes. Its function is as follows. (Microbial infection) Mediates TRAF6 auto-ubiquitination in the presence of human cytomegalovirus protein UL144, resulting in the virally controlled activation of NF-kappa-B stimulation at early times of HCMV infection. The chain is E3 ubiquitin-protein ligase TRIM23 (TRIM23) from Homo sapiens (Human).